The chain runs to 966 residues: Integrator complex subunit 7 (966 aa).

2 positions are modified to phosphoserine: Ser-338 and Ser-809. The disordered stretch occupies residues 941–966; it reads LQQQAQQPLQPQPLPQPQPRSAYTRF.

It belongs to the Integrator subunit 7 family. Component of the Integrator complex, composed of core subunits INTS1, INTS2, INTS3, INTS4, INTS5, INTS6, INTS7, INTS8, INTS9/RC74, INTS10, INTS11/CPSF3L, INTS12, INTS13, INTS14 and INTS15. The core complex associates with protein phosphatase 2A subunits PPP2CA and PPP2R1A, to form the Integrator-PP2A (INTAC) complex. Interacts with NABP2.

It is found in the nucleus. The protein resides in the chromosome. Its subcellular location is the cytoplasm. Its function is as follows. Component of the integrator complex, a multiprotein complex that terminates RNA polymerase II (Pol II) transcription in the promoter-proximal region of genes. The integrator complex provides a quality checkpoint during transcription elongation by driving premature transcription termination of transcripts that are unfavorably configured for transcriptional elongation: the complex terminates transcription by (1) catalyzing dephosphorylation of the C-terminal domain (CTD) of Pol II subunit POLR2A/RPB1 and SUPT5H/SPT5, (2) degrading the exiting nascent RNA transcript via endonuclease activity and (3) promoting the release of Pol II from bound DNA. The integrator complex is also involved in terminating the synthesis of non-coding Pol II transcripts, such as enhancer RNAs (eRNAs), small nuclear RNAs (snRNAs), telomerase RNAs and long non-coding RNAs (lncRNAs). May be not involved in the recruitment of cytoplasmic dynein to the nuclear envelope by different components of the INT complex. Plays a role in DNA damage response (DDR) signaling during the S phase. The sequence is that of Integrator complex subunit 7 (Ints7) from Mus musculus (Mouse).